The sequence spans 209 residues: Auxin-binding protein ABP19a (209 aa).

A signal peptide spans 1–18 (MIFPIFFTFFLLLSSSHA). Cysteine 24 and cysteine 39 form a disulfide bridge. The region spanning 53–199 (SGLGIAGNTT…TTFLDAAQIK (147 aa)) is the Cupin type-1 domain. Asparagine 60 is a glycosylation site (N-linked (GlcNAc...) asparagine). Mn(2+)-binding residues include histidine 101, histidine 103, glutamate 108, and histidine 147.

The protein belongs to the germin family. In terms of assembly, interacts with ABP20.

Its subcellular location is the secreted. It is found in the extracellular space. The protein localises to the apoplast. The protein resides in the cell wall. Its function is as follows. Probable receptor for the plant growth-promoting hormone auxin. This chain is Auxin-binding protein ABP19a (ABP19A), found in Prunus persica (Peach).